A 286-amino-acid polypeptide reads, in one-letter code: Prepilin leader peptidase/N-methyltransferase (286 aa).

A helical transmembrane segment spans residues 11 to 31; it reads LGIFFVGLFSLMVGSFLNVVI. Positions 74, 77, 99, and 102 each coordinate Zn(2+). The next 6 helical transmembrane spans lie at 106–126, 132–152, 161–181, 185–205, 231–251, and 257–277; these read ISAR…IVAF, LSLG…FIDA, LTLP…FINL, VIGA…FKLI, LPII…GIGL, and MPFG…GAQI.

This sequence belongs to the peptidase A24 family. Zn(2+) serves as cofactor.

The protein resides in the cell inner membrane. The enzyme catalyses Typically cleaves a -Gly-|-Phe- bond to release an N-terminal, basic peptide of 5-8 residues from type IV prepilin, and then N-methylates the new N-terminal amino group, the methyl donor being S-adenosyl-L-methionine.. Functionally, plays an essential role in type IV pili and type II pseudopili formation by proteolytically removing the leader sequence from substrate proteins and subsequently monomethylating the alpha-amino group of the newly exposed N-terminal phenylalanine. The sequence is that of Prepilin leader peptidase/N-methyltransferase (fimP) from Dichelobacter nodosus (Bacteroides nodosus).